A 282-amino-acid polypeptide reads, in one-letter code: NADH-ubiquinone oxidoreductase chain 2 (282 aa).

A run of 7 helical transmembrane segments spans residues 17 to 37, 58 to 78, 87 to 107, 115 to 135, 166 to 186, 202 to 222, and 232 to 252; these read ILTN…VVFI, SLGL…IILL, FWIF…FLTF, ILLQ…LLIC, FSMF…VLLI, TTLV…IFSL, and FTLF…FWLI.

This sequence belongs to the complex I subunit 2 family.

It is found in the mitochondrion inner membrane. The catalysed reaction is a ubiquinone + NADH + 5 H(+)(in) = a ubiquinol + NAD(+) + 4 H(+)(out). Core subunit of the mitochondrial membrane respiratory chain NADH dehydrogenase (Complex I) that is believed to belong to the minimal assembly required for catalysis. Complex I functions in the transfer of electrons from NADH to the respiratory chain. The immediate electron acceptor for the enzyme is believed to be ubiquinone. This Caenorhabditis elegans protein is NADH-ubiquinone oxidoreductase chain 2.